We begin with the raw amino-acid sequence, 873 residues long: Cilia- and flagella-associated protein 58 (873 aa).

Coiled-coil stretches lie at residues 106 to 609 (VDSA…VISE) and 642 to 832 (ETQY…QKRK). Residues 202-221 (QEIQHRQNEASRESRKKEKL) form a disordered region. Basic and acidic residues predominate over residues 204–221 (IQHRQNEASRESRKKEKL).

The protein belongs to the CFAP58 family. Interacts with ODFP2. Predominantly expressed in the testis. Also found at lower levels in ciliated cells and tissues such as neural progenitor cells and oviducts.

The protein localises to the cell projection. It localises to the cilium. The protein resides in the flagellum. It is found in the cytoplasm. Its subcellular location is the cytoskeleton. The protein localises to the microtubule organizing center. It localises to the centrosome. In terms of biological role, has an essential role in the assembly and organization of the sperm flagellar axoneme. Required for the elongation of the primary cilium and sperm flagellar midpiece via modulation of the Notch signaling pathway. In Mus musculus (Mouse), this protein is Cilia- and flagella-associated protein 58.